The chain runs to 832 residues: AP-1 complex subunit gamma-1 (832 aa).

The GAE domain occupies 733–832; it reads LNVYASLLSA…QFDHKFDETL (100 aa).

In terms of assembly, adapter protein complex 1 (AP-1) is a heterotetramer composed of two large adaptins (gamma-type subunit APL4 and beta-type subunit APL2), a medium adaptin (mu-type subunit APM1) and a small adaptin (sigma-type subunit APS1). AP-1 interacts with clathrin. Also a component of the AP-1R complex composed of at least APM2, APL4 and APS1.

The protein resides in the cytoplasm. The protein localises to the golgi apparatus membrane. Its subcellular location is the cytoplasmic vesicle. It is found in the clathrin-coated vesicle membrane. Its function is as follows. Adaptins are components of the adapter complexes which link clathrin to receptors in coated vesicles. Clathrin-associated protein complexes are believed to interact with the cytoplasmic tails of membrane proteins, leading to their selection and concentration. The AP-1 complex interacts directly with clathrin. Component of the AP-1-related (AP-1R) complex, an adapter protein complex that mediates sorting of cargo SNARE SNC1. In contrast to the APM1-containing AP-1 complex, AP-1R is incapable of sorting CHS3. This is AP-1 complex subunit gamma-1 (APL4) from Saccharomyces cerevisiae (strain ATCC 204508 / S288c) (Baker's yeast).